We begin with the raw amino-acid sequence, 386 residues long: MYNATNSRSRMFRYEVVGLRQTAETEKTNYAIRNSGSQFFNVPYDRMNQFMQQITRWGGKIVSIQPLNGTVAPLAATTEPAANNGAAPVKEKKVDIPVNIYRPNNPCIGKVISNEELVREGGEGTVKHIIFDISGTELRYLEGQSIGIIPAGTDANGKPHKLRLYSIASTRHGDFQDDKTVSLCVRRLEYKDKETGETIYGVCSSYLNQLQPGDEVKITGPVGKEMLLSDDPEATIIMLATGTGIAPFRAFLWRMFKENNPDYQFKGLAWLFFGVAYTANILYKDELEAIQAQYPDHFRLTYAISREQKTPDGGKMYIQGRIAEHADEIWQLLQKKNTHVYMCGLRGMEPGIDEAMTAAAAKNGADWQEFLKGTLKKEGRWHVETY.

The 59-residue stretch at 9–67 (SRMFRYEVVGLRQTAETEKTNYAIRNSGSQFFNVPYDRMNQFMQQITRWGGKIVSIQPL) folds into the CpcD-like domain. The 125-residue stretch at 104-228 (NNPCIGKVIS…TGPVGKEMLL (125 aa)) folds into the FAD-binding FR-type domain. Residues 163–166 (RLYS), 184–186 (CVR), Tyr-190, 202–204 (VCS), and Thr-243 each bind FAD. NADP(+) is bound by residues Ser-166 and Arg-186. NADP(+)-binding positions include Thr-243, 275 to 276 (VA), 305 to 306 (SR), 315 to 319 (KMYIQ), 344 to 345 (GL), and Glu-384.

Belongs to the ferredoxin--NADP reductase type 1 family. FAD is required as a cofactor.

It is found in the cellular thylakoid membrane. The catalysed reaction is 2 reduced [2Fe-2S]-[ferredoxin] + NADP(+) + H(+) = 2 oxidized [2Fe-2S]-[ferredoxin] + NADPH. The protein is Ferredoxin--NADP reductase (petH) of Thermosynechococcus vestitus (strain NIES-2133 / IAM M-273 / BP-1).